The chain runs to 313 residues: Cyclin-dependent kinase B2-1 (313 aa).

At M1 the chain carries N-acetylmethionine. The Protein kinase domain maps to 14–304 (FEKLEKVGEG…AKMAMEHPYF (291 aa)). ATP contacts are provided by residues 20–28 (VGEGTYGKV) and K43. Y25 is subject to Phosphotyrosine. D145 acts as the Proton acceptor in catalysis. The residue at position 179 (T179) is a Phosphothreonine.

This sequence belongs to the protein kinase superfamily. CMGC Ser/Thr protein kinase family. CDC2/CDKX subfamily. Interacts with CYCD4-1 and CKS1. Expressed in root tips, shoot apical meristem, leaf primordia vascular tissues and tapetum of anthers.

The catalysed reaction is L-seryl-[protein] + ATP = O-phospho-L-seryl-[protein] + ADP + H(+). The enzyme catalyses L-threonyl-[protein] + ATP = O-phospho-L-threonyl-[protein] + ADP + H(+). It catalyses the reaction [DNA-directed RNA polymerase] + ATP = phospho-[DNA-directed RNA polymerase] + ADP + H(+). The polypeptide is Cyclin-dependent kinase B2-1 (CDKB2-1) (Arabidopsis thaliana (Mouse-ear cress)).